The following is a 159-amino-acid chain: Ribosomal RNA large subunit methyltransferase H (159 aa).

S-adenosyl-L-methionine is bound by residues Leu76, Gly108, and 127–132 (FSKMTF).

Belongs to the RNA methyltransferase RlmH family. In terms of assembly, homodimer.

Its subcellular location is the cytoplasm. The enzyme catalyses pseudouridine(1915) in 23S rRNA + S-adenosyl-L-methionine = N(3)-methylpseudouridine(1915) in 23S rRNA + S-adenosyl-L-homocysteine + H(+). Functionally, specifically methylates the pseudouridine at position 1915 (m3Psi1915) in 23S rRNA. The protein is Ribosomal RNA large subunit methyltransferase H of Bifidobacterium animalis subsp. lactis (strain AD011).